The following is a 708-amino-acid chain: Capsid scaffolding protein (708 aa).

Catalysis depends on charge relay system residues His-63, Ser-132, and His-157. Disordered stretches follow at residues 269-339 (ASAE…MSHP), 455-565 (HPSY…QQQR), and 593-619 (ALPS…SGGG). Residues 284–293 (PAAGARVPSS) are compositionally biased toward low complexity. Residues 294-311 (SPSPPVEPPSPVQPPALP) are compositionally biased toward pro residues. Positions 326 to 339 (SPSEPAEAASMSHP) are enriched in low complexity. Positions 333-352 (AASMSHPLSAAVPAATAPPG) are interaction with pAP. The segment covering 498 to 513 (KQHRHGGSGGHNKRRK) has biased composition (basic residues). 2 short sequence motifs (nuclear localization signal) span residues 510–515 (KRRKET) and 537–543 (RARKRLK). A compositionally biased stretch (low complexity) spans 593 to 611 (ALPSAASSSPTTTTVCTPT). An interaction with major capsid protein region spans residues 688-708 (PPKDMVDLNRRIFVAALNKLE).

This sequence belongs to the herpesviridae capsid scaffolding protein family. In terms of assembly, homomultimer. Interacts with major capsid protein. As to quaternary structure, exists in a monomer-dimer equilibrium with the dimer being the active species. In terms of processing, capsid scaffolding protein is cleaved by assemblin after formation of the spherical procapsid. As a result, the capsid obtains its mature, icosahedral shape. Cleavages occur at two or more sites: release (R-site) and maturation (M-site).

It is found in the host cytoplasm. The protein localises to the host nucleus. The catalysed reaction is Cleaves -Ala-|-Ser- and -Ala-|-Ala- bonds in the scaffold protein.. In terms of biological role, acts as a scaffold protein by binding major capsid protein in the cytoplasm, inducing the nuclear localization of both proteins. Multimerizes in the nucleus such as major capsid protein forms the icosahedral T=16 capsid. Autocatalytic cleavage releases the assembly protein, and subsequently abolishes interaction with major capsid protein. Cleavages products are evicted from the capsid before or during DNA packaging. Protease that plays an essential role in virion assembly within the nucleus. Catalyzes the cleavage of the assembly protein after formation of the spherical procapsid. By that cleavage, the capsid matures and gains its icosahedral shape. The cleavage sites seem to include -Ala-Ser-, -Ala-Ala-, as well as Ala-Thr bonds. Assemblin and cleavages products are evicted from the capsid before or during DNA packaging. Functionally, plays a major role in capsid assembly. Acts as a scaffold protein by binding major capsid protein. Multimerizes in the nucleus such as major capsid protein forms the icosahedral T=16 capsid. Cleaved by assemblin after capsid completion. The cleavages products are evicted from the capsid before or during DNA packaging. In Homo sapiens (Human), this protein is Capsid scaffolding protein (UL80).